Here is a 202-residue protein sequence, read N- to C-terminus: LexA repressor (202 aa).

Positions 29-49 form a DNA-binding region, H-T-H motif; that stretch reads VREICTAVGLKSTSTVHSYLE. Active-site for autocatalytic cleavage activity residues include Ser-125 and Lys-162.

This sequence belongs to the peptidase S24 family. As to quaternary structure, homodimer.

The catalysed reaction is Hydrolysis of Ala-|-Gly bond in repressor LexA.. Functionally, represses a number of genes involved in the response to DNA damage (SOS response), including recA and lexA. In the presence of single-stranded DNA, RecA interacts with LexA causing an autocatalytic cleavage which disrupts the DNA-binding part of LexA, leading to derepression of the SOS regulon and eventually DNA repair. This is LexA repressor from Clostridium kluyveri (strain NBRC 12016).